The primary structure comprises 290 residues: Glycine--tRNA ligase alpha subunit (290 aa).

This sequence belongs to the class-II aminoacyl-tRNA synthetase family. In terms of assembly, tetramer of two alpha and two beta subunits.

It localises to the cytoplasm. The catalysed reaction is tRNA(Gly) + glycine + ATP = glycyl-tRNA(Gly) + AMP + diphosphate. In Desulfotalea psychrophila (strain LSv54 / DSM 12343), this protein is Glycine--tRNA ligase alpha subunit.